A 381-amino-acid polypeptide reads, in one-letter code: RxLR effector protein 54 (381 aa).

The first 19 residues, 1 to 19, serve as a signal peptide directing secretion; that stretch reads MRFQSIMMLTITCAGTCLA. Residues 57–75 carry the RxLR-dEER motif; the sequence is RFLRFDTVARDTAGNDEER. WY-domain regions lie at residues 97 to 150, 151 to 198, 199 to 247, 251 to 299, and 302 to 354; these read SAEE…ANNG, NQAF…SLSG, NWIR…WNKN, FFGD…LLTS, and SHKT…RDKI. Positions 372-381 match the ATG8 interacting motif motif; sequence KPLDFDWEIV.

It belongs to the RxLR effector family. In terms of assembly, interacts via its C-terminal AIM with host ATG8CL.

The protein resides in the secreted. The protein localises to the host nucleus. It is found in the host cytoplasm. In terms of biological role, effector that specifically binds host autophagy protein ATG8CL of the ATG8 family to stimulate autophagosome formation and subsequent autophagy rather than blocking autophagic flux. The pathogen remodels host-microbe interface by co-opting the host autophagy machinery which plays a key role in plant immunity. PexRD54 competes with the autophagy cargo receptor Joka2 to deplete it out of ATG8CL complexes and interferes with Joka2's positive effect on pathogen defense. The protein is RxLR effector protein 54 of Phytophthora infestans (strain T30-4) (Potato late blight agent).